The sequence spans 631 residues: MFYAHFVLSKRGPLAKIWLAAHWDKKLTKAHVFECNLESSVESIISPKVKMALRTSGHLLLGVVRIYHRKAKYLLADCNEAFIKIKMAFRPGVVDLPEENREAAYNAITLPEEFHDFDQPLPDLDDIDVAQQFSLNQSRVEEITMREEVGNISILQENDFGDFGMDDREIMREGSAFEDDDMLVSTTTSNLLLESEQSTSNLNEKINHLEYEDQYKDDNFGEGNDGGILDDKLISNNDGGIFDDPPALSEAGVMLPEQPAHDDMDEDDNVSMGGPDSPDSVDPVEPMPTMTDQTTLVPNEEEAFALEPIDITVKETKAKRKRKLIVDSVKELDSKTIRAQLSDYSDIVTTLDLAPPTKKLMMWKETGGVEKLFSLPAQPLWNNRLLKLFTRCLTPLVPEDLRKRRKGGEADNLDEFLKEFENPEVPREDQQQQHQQRDVIDEPIIEEPSRLQESVMEASRTNIDESAMPPPPPQGVKRKAGQIDPEPVMPPQQVEQMEIPPVELPPEEPPNICQLIPELELLPEKEKEKEKEKEDDEEEEDEDASGGDQDQEERRWNKRTQQMLHGLQRALAKTGAESISLLELCRNTNRKQAAAKFYSFLVLKKQQAIELTQEEPYSDIIATPGPRFHII.

Serine 46 carries the post-translational modification Phosphoserine. Lysine 48 participates in a covalent cross-link: Glycyl lysine isopeptide (Lys-Gly) (interchain with G-Cter in SUMO2). The tract at residues 126–282 (DIDVAQQFSL…GGPDSPDSVD (157 aa)) is required for interaction with SMARCA5. A Phosphoserine modification is found at serine 153. Residues 154–171 (ILQENDFGDFGMDDREIM) are interaction with NIPBL. Serine 175 is subject to Phosphoserine. Lysine 216 is covalently cross-linked (Glycyl lysine isopeptide (Lys-Gly) (interchain with G-Cter in SUMO2)). Serine 249 carries the post-translational modification Phosphoserine. Residues 258–285 (QPAHDDMDEDDNVSMGGPDSPDSVDPVE) form a disordered region. Residues 271-285 (SMGGPDSPDSVDPVE) show a composition bias toward low complexity. The interaction with WAPL and PDS5B stretch occupies residues 287-403 (MPTMTDQTTL…TPLVPEDLRK (117 aa)). Positions 362–403 (MWKETGGVEKLFSLPAQPLWNNRLLKLFTRCLTPLVPEDLRK) are interaction with STAG1. At threonine 394 the chain carries Phosphothreonine. Lysine 418 is covalently cross-linked (Glycyl lysine isopeptide (Lys-Gly) (interchain with G-Cter in SUMO2)). The span at 423–440 (PEVPREDQQQQHQQRDVI) shows a compositional bias: basic and acidic residues. 2 disordered regions span residues 423–489 (PEVP…EPVM) and 517–558 (PELE…RWNK). Serine 454 is modified (phosphoserine). Residues 522–532 (LPEKEKEKEKE) are compositionally biased toward basic and acidic residues. A compositionally biased stretch (acidic residues) spans 533-551 (KEDDEEEEDEDASGGDQDQ). Phosphoserine is present on serine 545. Threonine 623 carries the post-translational modification Phosphothreonine.

This sequence belongs to the rad21 family. Component of the cohesin complex, which consists of an SMC1A/B and SMC3 heterodimer core and 2 non-Smc subunits RAD21 and STAG1/SA1, STAG2/SA2 or STAG3/SA3. Interacts (via C-terminus) with SMC1A and (via N-terminus) with SMC3; these interactions are direct. The cohesin complex interacts with NUMA1. The cohesin complex also interacts with CDCA5, PDS5A and PDS5B; this interaction might regulate the ability of the cohesin complex to mediate sister chromatid cohesion. The interaction with PDS5B is direct and is stimulated by STAG1/SA1. The cohesin complex interacts with the cohesin loading complex subunits NIPBL/Scc2 (via HEAT repeats) and MAU2/Scc4. NIPBL directly contacts all members of the complex, RAD21, SMC1A/B, SMC3 and STAG1. The cohesin complex interacts with DDX11/ChIR1. Directly interacts with WAPL; this interaction is stimulated by STAG1/SA1. Interacts with the ISWI chromatin remodeling complex component SMARCA5/SNF2h; the interaction is direct. Interacts with the NuRD complex component CHD4; the interaction is direct. Cleaved by separase/ESPL1 at the onset of anaphase; this cleavage is required for sister chromatid separation and cytokinesis. Cleaved by caspase-3/CASP3 or caspase-7/CASP7 at the beginning of apoptosis. Post-translationally, phosphorylated; becomes hyperphosphorylated in M phase of cell cycle. The large dissociation of cohesin from chromosome arms during prophase may be partly due to its phosphorylation by PLK1. As to expression, expressed in the gut (at protein level).

It is found in the nucleus. It localises to the nucleus matrix. The protein resides in the chromosome. Its subcellular location is the centromere. The protein localises to the cytoplasm. It is found in the cytoskeleton. It localises to the spindle pole. The protein resides in the cytosol. Functionally, as a member of the cohesin complex, involved in sister chromatid cohesion from the time of DNA replication in S phase to their segregation in mitosis, a function that is essential for proper chromosome segregation, post-replicative DNA repair, and the prevention of inappropriate recombination between repetitive regions. The cohesin complex may also play a role in spindle pole assembly during mitosis. In interphase, cohesins may function in the control of gene expression by binding to numerous sites within the genome. May control RUNX1 gene expression. Binds to and represses APOB gene promoter. May play a role in embryonic gut development, possibly through the regulation of enteric neuron development. In terms of biological role, may promote apoptosis. This chain is Double-strand-break repair protein rad21 homolog (RAD21), found in Homo sapiens (Human).